Reading from the N-terminus, the 1055-residue chain is MLNENDIEQLTLQRLQSLGWEYRYGKDLPVHEGKFARGDLSGVVFVEQLREAVRKLNPQLPESAVDSVVKSATKSDIGDLVVRNQTFYKLLRDGVRVEYTQNGEQKIEMVRLVDFEHWGNNRFVAVNQLEIRSRKGGKRIPDIIGFVNGLPLVVFELKNPLRESADLLQAFNQFETYKDEIAELFVYNQALIISDGIVARLGSLSADFQRFTPWKVVDEKNKSARLYFDDELQSLLNGLMQPEDLLDYIRYFVLFERDSVGKTIKKIAAYHQYYGVNEAVDSTIWATSEKGDRRIGVMWHTQGSGKSISMLFYAGKLLAQPELKNPTIVVVTDRNDLDGQLFQTFSSGKDLIKQTPQQVEDRDQLRQLLAQNEVGGVFFTTIQKFALNEEESRFPILNERNNIIVISDEAHRSQYGFTQKLHNGKFQTGYARHLRDALPNASFIGFTGTPISLEDKDTQDVFGRYVSIYDLQDAVEDGATVPIVYDDARQIRLNKKDHDALFAEIDALLEEEPSTSLRLREKLLGSQERLIELAADFVQHFAKRNEVVDSKAMMVVSSRQICVDLYNQIIALHPEWHSDNINEGAIKIVMTGSASDTPEMQKHIYSKQEKQTLERRFKDPNDPLKVVIVRDMWLTGFDAPCCNTMYLDKPMKGHNLMQAIARVNRVFANKSRENGGLIVDYVGLAKELRAATQQYTNSTGKGQLAEDVQSVFFKMKEQLEFIRTLFATPIEGKTFDVQAALEKDNPNDLLMAIRFAANHILSLDQLSFDGKAHEQHWFNKKETEPRKKAFLKTAGLVKKGYMLCGTLAEVEPYNQEIAFYDAVRAILTKREQKGTGTNERQILLKKLVNQTVYSEGVIDLFDLLEKPQPQISLLSEEFLQTVKNSPTKNLWVSAMERYLASEIKVKSGTNLTLQKDFERRLKEALNQYHNHNLTVVEILDELFKMSQDFQERLALGKKLGLTKEELAFYEALSQNQSAKDLMGDEVLSKLAKEITETLRKSVTIDWQYKEAVRARIRLLVRRALQKYKYPPDKQEEAVTYVIKQAEEIAEDLTGL.

Residues 287–468 form the Helicase ATP-binding domain; it reads TSEKGDRRIG…QDVFGRYVSI (182 aa).

The protein belongs to the HsdR family. The type I restriction/modification system is composed of three polypeptides R, M and S; the restriction enzyme has stoichiometry R(2)M(2)S(1) while the methyltransferase is M(2)S(1).

It catalyses the reaction Endonucleolytic cleavage of DNA to give random double-stranded fragments with terminal 5'-phosphates, ATP is simultaneously hydrolyzed.. In terms of biological role, the restriction (R) subunit of a type I restriction enzyme that recognizes 5'-RAACN(5)TAG-3' and cleaves a random distance away. Subunit R is required for both nuclease and ATPase activities, but not for modification. After locating a non-methylated recognition site, the enzyme complex serves as a molecular motor that translocates DNA in an ATP-dependent manner until a collision occurs that triggers cleavage. This Haemophilus influenzae (strain ATCC 51907 / DSM 11121 / KW20 / Rd) protein is Type I restriction enzyme HindI endonuclease subunit.